The primary structure comprises 233 residues: DNA repair protein RecO (233 aa).

The protein belongs to the RecO family.

Its function is as follows. Involved in DNA repair and RecF pathway recombination. The protein is DNA repair protein RecO of Pseudomonas aeruginosa (strain LESB58).